The following is a 218-amino-acid chain: 23 kDa integral membrane protein (218 aa).

Over 1 to 12 (MATLGTGMRCLK) the chain is Cytoplasmic. A helical transmembrane segment spans residues 13 to 36 (SCVFILNIICLLCSLVLIGAGAYV). Topologically, residues 37 to 55 (EVKFSQYEANLHKVWQAAP) are extracellular. The chain crosses the membrane as a helical span at residues 56 to 71 (IAIIVVGVVILIVSFL). At 72-82 (GCCGAIKENVC) the chain is on the cytoplasmic side. Residues 83-108 (MLYMYAFFLIVLLIAELVAAIVAVVY) form a helical membrane-spanning segment. The Extracellular portion of the chain corresponds to 109-183 (KDKIDDEINT…SVFSAFLKRN (75 aa)). Residues 184-205 (LIIVACVAFGVCFFQLLSIVIA) traverse the membrane as a helical segment. Residues 206–218 (CCLGQRIHDYQNV) lie on the Cytoplasmic side of the membrane.

This sequence belongs to the tetraspanin (TM4SF) family.

It is found in the membrane. The polypeptide is 23 kDa integral membrane protein (Schistosoma japonicum (Blood fluke)).